A 96-amino-acid chain; its full sequence is Large ribosomal subunit protein bL27 (96 aa).

A propeptide spanning residues 1-9 is cleaved from the precursor; the sequence is MLRLDLQFF.

This sequence belongs to the bacterial ribosomal protein bL27 family. Post-translationally, the N-terminus is cleaved by ribosomal processing cysteine protease Prp.

The polypeptide is Large ribosomal subunit protein bL27 (Geobacillus kaustophilus (strain HTA426)).